The following is a 396-amino-acid chain: Elongation factor Tu (396 aa).

Residues K10–E206 enclose the tr-type G domain. The tract at residues G19–T26 is G1. G19–T26 serves as a coordination point for GTP. T26 lines the Mg(2+) pocket. The G2 stretch occupies residues G60–S64. Positions D81 to G84 are G3. GTP-binding positions include D81–H85 and N136–D139. A G4 region spans residues N136–D139. Residues S174–L176 form a G5 region.

The protein belongs to the TRAFAC class translation factor GTPase superfamily. Classic translation factor GTPase family. EF-Tu/EF-1A subfamily. Monomer.

The protein localises to the cytoplasm. It carries out the reaction GTP + H2O = GDP + phosphate + H(+). In terms of biological role, GTP hydrolase that promotes the GTP-dependent binding of aminoacyl-tRNA to the A-site of ribosomes during protein biosynthesis. The protein is Elongation factor Tu of Bradyrhizobium diazoefficiens (strain JCM 10833 / BCRC 13528 / IAM 13628 / NBRC 14792 / USDA 110).